We begin with the raw amino-acid sequence, 426 residues long: Enolase (426 aa).

(2R)-2-phosphoglycerate is bound at residue Gln163. Glu205 serves as the catalytic Proton donor. Asp242, Glu286, and Asp313 together coordinate Mg(2+). (2R)-2-phosphoglycerate-binding residues include Lys338, Arg367, Ser368, and Lys389. Lys338 functions as the Proton acceptor in the catalytic mechanism.

Belongs to the enolase family. Mg(2+) serves as cofactor.

It is found in the cytoplasm. The protein resides in the secreted. Its subcellular location is the cell surface. The enzyme catalyses (2R)-2-phosphoglycerate = phosphoenolpyruvate + H2O. It functions in the pathway carbohydrate degradation; glycolysis; pyruvate from D-glyceraldehyde 3-phosphate: step 4/5. Catalyzes the reversible conversion of 2-phosphoglycerate (2-PG) into phosphoenolpyruvate (PEP). It is essential for the degradation of carbohydrates via glycolysis. The polypeptide is Enolase (Helicobacter pylori (strain Shi470)).